Reading from the N-terminus, the 164-residue chain is Transcription antitermination protein NusB (164 aa).

This sequence belongs to the NusB family.

Involved in transcription antitermination. Required for transcription of ribosomal RNA (rRNA) genes. Binds specifically to the boxA antiterminator sequence of the ribosomal RNA (rrn) operons. This is Transcription antitermination protein NusB from Desulfovibrio desulfuricans (strain ATCC 27774 / DSM 6949 / MB).